Reading from the N-terminus, the 293-residue chain is Histone H3-like centromeric protein CSE4 (293 aa).

Positions 132–141 (QDLSYDESDY) are enriched in acidic residues. A disordered region spans residues 132 to 169 (QDLSYDESDYSDPLQEIDSNYRESPRRTTDKILKSSSK). Basic and acidic residues predominate over residues 150 to 164 (SNYRESPRRTTDKIL). The segment at 157–291 (RRTTDKILKS…VQLARRIRGQ (135 aa)) is H3-like.

This sequence belongs to the histone H3 family. Component of centromeric nucleosomes, where DNA is wrapped around a histone octamer core. The octamer contains two molecules each of H2A, H2B, CSE4/CENPA and H4 assembled in one CSE4-H4 heterotetramer and two H2A-H2B heterodimers. Interacts with the inner kinetochore. In terms of processing, ubiquitinated. Is degraded through ubiquitin-mediated proteolysis when not protected by its association to the kinetochore.

The protein resides in the nucleus. The protein localises to the chromosome. It localises to the centromere. Functionally, histone H3-like nucleosomal protein that is specifically found in centromeric nucleosomes. Replaces conventional H3 in the nucleosome core of centromeric chromatin that serves as an assembly site for the inner kinetochore. Required for recruitment and assembly of kinetochore proteins, mitotic progression and chromosome segregation. May serve as an epigenetic mark that propagates centromere identity through replication and cell division. The protein is Histone H3-like centromeric protein CSE4 (CSE4) of Monosporozyma servazzii (Yeast).